A 916-amino-acid polypeptide reads, in one-letter code: MSYTLDSLGNPSAYRRVTETRSSFSRVSGSPSSGFRSQSWSRGSPSTVSSSYKRSMLAPRLAYSSAMLSSAESSLDFSQSSSLLNGGSGPGGDYKLSRSNEKEQLQGLNDRFAGYIEKVHYLEQQNKEIEAEIQALRQKQASHAQLGDAYDQEIRELRATLEMVNHEKAQVQLDSDHLEEDIHRLKERFEEEARLRDDTEAAIRALRKDIEEASLVKVELDKKVQSLQDEVAFLRSNHEEEVADLLAQIQASHITVERKDYLKTDISTALKEIRSQLESHSDQNMHQAEEWFKCRYAKLTEAAEQNKEAIRSAKEEIAEYRRQLQSKSIELESVRGTKESLERQLSDIEERHNHDLSSYQDTIQQLENELRGTKWEMARHLREYQDLLNVKMALDIEIAAYRKLLEGEETRFSTFAGSITGPLYTHRPPITISSKIQKPKVEAPKLKVQHKFVEEIIEETKVEDEKSEMEEALTAITEELAVSMKEEKKEAAEEKEEEPEAEEEEVAAKKSPVKATAPEVKEEEGEKEEEEGQEEEEEEDEGAKSDQAEEGGSEKEGSSEKEEGEQEEGETEAEAEGEEAEAKEEKKVEEKSEEVATKEELVADAKVEKPEKAKSPVPKSPVEEKGKSPVPKSPVEEKGKSPVPKSPVEEKGKSPVPKSPVEEKGKSPVSKSPVEEKAKSPVPKSPVEEAKSKAEVGKGEQKEEEEKEVKEAPKEEKVEKKEEKPKDVPEKKKAESPVKEEAVAEVVTITKSVKVHLEKETKEEGKPLQQEKEKEKAGGEGGSEEEGSDKGAKGSRKEDIAVNGEVEGKEEVEQETKEKGSGREEEKGVVTNGLDLSPADEKKGGDKSEEKVVVTKTVEKITSEGGDGATKYITKSVTVTQKVEEHEETFEEKLVSTKKVEKVTSHAIVKEVTQSD.

The segment covering 1–10 has biased composition (polar residues); that stretch reads MSYTLDSLGN. The interval 1–51 is disordered; that stretch reads MSYTLDSLGNPSAYRRVTETRSSFSRVSGSPSSGFRSQSWSRGSPSTVSSS. N-acetylserine is present on Ser2. The head stretch occupies residues 2–104; the sequence is SYTLDSLGNP…KLSRSNEKEQ (103 aa). The segment covering 21–44 has biased composition (low complexity); the sequence is RSSFSRVSGSPSSGFRSQSWSRGS. The residue at position 30 (Ser30) is a Phosphoserine. Arg42 carries the omega-N-methylarginine modification. Residue Thr47 is glycosylated (O-linked (GlcNAc) threonine). Residue Ser99 is modified to Phosphoserine. An IF rod domain is found at 101 to 412; it reads EKEQLQGLND…KLLEGEETRF (312 aa). The coil 1A stretch occupies residues 105-136; sequence LQGLNDRFAGYIEKVHYLEQQNKEIEAEIQAL. The segment at 137–149 is linker 1; that stretch reads RQKQASHAQLGDA. The interval 150 to 248 is coil 1B; sequence YDQEIRELRA…EEEVADLLAQ (99 aa). Phosphoserine is present on Ser226. Residues 249–265 form a linker 12 region; the sequence is IQASHITVERKDYLKTD. A coil 2A region spans residues 266 to 287; the sequence is ISTALKEIRSQLESHSDQNMHQ. The tract at residues 288–291 is linker 2; the sequence is AEEW. The tract at residues 292 to 412 is coil 2B; sequence FKCRYAKLTE…KLLEGEETRF (121 aa). Tyr320 is subject to Phosphotyrosine. Residues Ser346 and Ser418 each carry the phosphoserine modification. The tract at residues 413–916 is tail; that stretch reads STFAGSITGP…AIVKEVTQSD (504 aa). Thr431 is a glycosylation site (O-linked (GlcNAc) threonine). Phosphoserine is present on residues Ser467 and Ser483. Residues 485 to 851 form a disordered region; the sequence is KEEKKEAAEE…KKGGDKSEEK (367 aa). The span at 493 to 505 shows a compositional bias: acidic residues; the sequence is EEKEEEPEAEEEE. A Phosphoserine modification is found at Ser511. Residues 521–541 show a composition bias toward acidic residues; sequence KEEEGEKEEEEGQEEEEEEDE. Residues 542-561 show a composition bias toward basic and acidic residues; the sequence is GAKSDQAEEGGSEKEGSSEK. Residues Ser545, Ser553, Ser558, and Ser559 each carry the phosphoserine modification. The span at 562-582 shows a compositional bias: acidic residues; sequence EEGEQEEGETEAEAEGEEAEA. Residue Thr571 is modified to Phosphothreonine. The segment covering 583-614 has biased composition (basic and acidic residues); sequence KEEKKVEEKSEEVATKEELVADAKVEKPEKAK. 6 tandem repeats follow at residues 614–626, 627–639, 640–652, 653–665, 666–678, and 679–691. A 6 X 13 AA approximate tandem repeats of K-S-P-V-[PS]-K-S-P-V-E-E-[KA]-[GAK] region spans residues 614 to 691; the sequence is KSPVPKSPVE…VPKSPVEEAK (78 aa). Phosphoserine occurs at positions 641 and 646. Phosphoserine is present on residues Ser680 and Ser685. 3 stretches are compositionally biased toward basic and acidic residues: residues 686 to 701, 707 to 742, and 755 to 778; these read PVEEAKSKAEVGKGEQ, KEVKEAPKEEKVEKKEEKPKDVPEKKKAESPVKEEA, and VHLEKETKEEGKPLQQEKEKEKAG. Residue Ser736 is modified to Phosphoserine. Residues Ser783, Ser821, and Ser837 each carry the phosphoserine modification. Positions 788–828 are enriched in basic and acidic residues; sequence SDKGAKGSRKEDIAVNGEVEGKEEVEQETKEKGSGREEEKG. The segment covering 839–851 has biased composition (basic and acidic residues); it reads ADEKKGGDKSEEK.

Belongs to the intermediate filament family. In terms of assembly, forms heterodimers with NEFL; which can further hetero-oligomerize (in vitro). Forms heterodimers with INA (in vitro). Post-translationally, there are a number of repeats of the tripeptide K-S-P, NFM is phosphorylated on a number of the serines in this motif. It is thought that phosphorylation of NFM results in the formation of interfilament cross bridges that are important in the maintenance of axonal caliber. In terms of processing, phosphorylation seems to play a major role in the functioning of the larger neurofilament polypeptides (NF-M and NF-H), the levels of phosphorylation being altered developmentally and coincidentally with a change in the neurofilament function. Phosphorylated in the head and rod regions by the PKC kinase PKN1, leading to the inhibition of polymerization.

It is found in the cytoplasm. The protein localises to the cytoskeleton. The protein resides in the cell projection. It localises to the axon. Neurofilaments usually contain three intermediate filament proteins: NEFL, NEFM, and NEFH which are involved in the maintenance of neuronal caliber. May additionally cooperate with the neuronal intermediate filament proteins PRPH and INA to form neuronal filamentous networks. This is Neurofilament medium polypeptide (NEFM) from Homo sapiens (Human).